Here is a 96-residue protein sequence, read N- to C-terminus: Antitoxin TacA3 (96 aa).

A neutralization domain region spans residues 61–96 (YLTERDTKMIMEILDNPPAPNEKLLAAAFALPDMKK).

It belongs to the TacA antitoxin family. In terms of assembly, forms a complex with cognate toxin TacT3. Forms a 4:2 antitoxin:toxin complex with cognate toxin TacT3. Forms a 4:4 antitoxin:toxin complex with promoter DNA, where 2 TacT3 dimers bridge 2 TacA3 dimers. Only TacA3 contacts promoter DNA.

Its function is as follows. Antitoxin component of a type II toxin-antitoxin (TA) system. Counteracts the toxic effect of cognate toxin TacT3, but not TacT1 or TacT2. Plays a role in persister cell formation. Functionally, the TacA3-TacT3 complex both represses and derepresses expression of its own operon. The hexameric 4:2 TacA3-TacT3 complex binds promoter DNA and represses its transcription; both subunits are required. The octomeric 4:4 TacA3-TacT3 complex derepresses the operon. The shift from hexameric to octomeric complex probably alters DNA-binding, leading to dissociation from the operator DNA and derepression. Does not bind the promoter of the TacA1-TacT1 operon. The polypeptide is Antitoxin TacA3 (Salmonella typhimurium (strain 14028s / SGSC 2262)).